A 477-amino-acid chain; its full sequence is Fibrinogen beta chain (477 aa).

The disordered stretch occupies residues Glu-1–Lys-76. Tyr-13 carries the sulfotyrosine modification. The N-linked (GlcNAc...) asparagine glycan is linked to Asn-27. Positions Arg-44–Leu-55 are enriched in basic residues. Intrachain disulfides connect Cys-220-Cys-304, Cys-230-Cys-259, and Cys-412-Cys-425. The region spanning Arg-221–Trp-476 is the Fibrinogen C-terminal domain.

Heterohexamer; disulfide linked. Contains 2 sets of 3 non-identical chains (alpha, beta and gamma). The 2 heterotrimers are in head to head conformation with the N-termini in a small central domain. In terms of processing, conversion of fibrinogen to fibrin is triggered by thrombin, which cleaves fibrinopeptides A and B from alpha and beta chains, and thus exposes the N-terminal polymerization sites responsible for the formation of the soft clot. The soft clot is converted into the hard clot by factor XIIIA which catalyzes the epsilon-(gamma-glutamyl)lysine cross-linking between gamma chains (stronger) and between alpha chains (weaker) of different monomers.

It localises to the secreted. Fibrinogen has a double function: yielding monomers that polymerize into fibrin and acting as a cofactor in platelet aggregation. The polypeptide is Fibrinogen beta chain (Petromyzon marinus (Sea lamprey)).